Consider the following 138-residue polypeptide: Holo-[acyl-carrier-protein] synthase (138 aa).

Residues aspartate 8 and glutamate 56 each contribute to the Mg(2+) site.

This sequence belongs to the P-Pant transferase superfamily. AcpS family. Requires Mg(2+) as cofactor.

It localises to the cytoplasm. The enzyme catalyses apo-[ACP] + CoA = holo-[ACP] + adenosine 3',5'-bisphosphate + H(+). Its function is as follows. Transfers the 4'-phosphopantetheine moiety from coenzyme A to a Ser of acyl-carrier-protein. The chain is Holo-[acyl-carrier-protein] synthase from Thermoanaerobacter pseudethanolicus (strain ATCC 33223 / 39E) (Clostridium thermohydrosulfuricum).